Reading from the N-terminus, the 296-residue chain is uncharacterized protein (296 aa).

A chloroplast-targeting transit peptide spans 1–57 (MTSFLSFSAISAHPPTFSGASFRPRSFSPRLFKSCVKCTYAEAGLSSASWSAPIDIV).

Belongs to the NAD(P)-dependent epimerase/dehydratase family.

It localises to the plastid. Its subcellular location is the chloroplast. The protein resides in the plastoglobule. This is an uncharacterized protein from Arabidopsis thaliana (Mouse-ear cress).